An 87-amino-acid chain; its full sequence is Cell division topological specificity factor (87 aa).

This sequence belongs to the MinE family.

Prevents the cell division inhibition by proteins MinC and MinD at internal division sites while permitting inhibition at polar sites. This ensures cell division at the proper site by restricting the formation of a division septum at the midpoint of the long axis of the cell. The chain is Cell division topological specificity factor from Aliivibrio fischeri (strain ATCC 700601 / ES114) (Vibrio fischeri).